We begin with the raw amino-acid sequence, 458 residues long: UDP-N-acetylmuramate--L-alanine ligase (458 aa).

Position 118–124 (118–124 (GTHGKTT)) interacts with ATP.

Belongs to the MurCDEF family.

It localises to the cytoplasm. The enzyme catalyses UDP-N-acetyl-alpha-D-muramate + L-alanine + ATP = UDP-N-acetyl-alpha-D-muramoyl-L-alanine + ADP + phosphate + H(+). It participates in cell wall biogenesis; peptidoglycan biosynthesis. In terms of biological role, cell wall formation. In Clostridium botulinum (strain Langeland / NCTC 10281 / Type F), this protein is UDP-N-acetylmuramate--L-alanine ligase.